A 417-amino-acid polypeptide reads, in one-letter code: Gamma-glutamyl phosphate reductase (417 aa).

Belongs to the gamma-glutamyl phosphate reductase family.

The protein localises to the cytoplasm. It catalyses the reaction L-glutamate 5-semialdehyde + phosphate + NADP(+) = L-glutamyl 5-phosphate + NADPH + H(+). It participates in amino-acid biosynthesis; L-proline biosynthesis; L-glutamate 5-semialdehyde from L-glutamate: step 2/2. In terms of biological role, catalyzes the NADPH-dependent reduction of L-glutamate 5-phosphate into L-glutamate 5-semialdehyde and phosphate. The product spontaneously undergoes cyclization to form 1-pyrroline-5-carboxylate. The polypeptide is Gamma-glutamyl phosphate reductase (Photorhabdus laumondii subsp. laumondii (strain DSM 15139 / CIP 105565 / TT01) (Photorhabdus luminescens subsp. laumondii)).